The sequence spans 85 residues: Small ribosomal subunit protein bS18 (85 aa).

The protein belongs to the bacterial ribosomal protein bS18 family. Part of the 30S ribosomal subunit. Forms a tight heterodimer with protein bS6.

Functionally, binds as a heterodimer with protein bS6 to the central domain of the 16S rRNA, where it helps stabilize the platform of the 30S subunit. This is Small ribosomal subunit protein bS18 from Helicobacter pylori (strain Shi470).